Reading from the N-terminus, the 584-residue chain is Levansucrase (584 aa).

The signal sequence occupies residues 1–30; it reads MAHVRRKVATLNMALAGSLLMVLGAQSALA. Gln-31 carries the pyrrolidone carboxylic acid modification. Sucrose contacts are provided by Trp-134, Asp-135, Ser-225, Arg-308, and Asp-309. Residue Asp-135 is the Nucleophile of the active site. Cys-339 and Cys-395 are oxidised to a cystine. The Proton donor/acceptor role is filled by Glu-401.

Belongs to the glycosyl hydrolase 68 family. Monomer. Post-translationally, the N-terminus is blocked. The N-terminal Gln is cyclized to a pyroglutamic acid.

The protein localises to the secreted. The enzyme catalyses [6)-beta-D-fructofuranosyl-(2-&gt;](n) alpha-D-glucopyranoside + sucrose = [6)-beta-D-fructofuranosyl-(2-&gt;](n+1) alpha-D-glucopyranoside + D-glucose. Its activity is regulated as follows. Strongly inhibited by Hg(2+) and slightly activated by Co(2+). Not inhibited by the metal ion chelator EDTA, suggesting that this enzyme does not need a metal cofactor. In terms of biological role, catalyzes the synthesis of levan, a fructose polymer, by transferring the fructosyl moiety from sucrose to a growing acceptor molecule. Also displays sucrose hydrolase activity. In vitro, catalyzes transfructosylation from sucrose to a variety of acceptors including water (sucrose hydrolysis), glucose (exchange reaction), fructan (polymerase reaction) and sucrose (oligofructoside synthesis). Levansucrase of G.diazotrophicus SRT4, unlike the enzyme of B.subtilis, causes accumulation of large quantities of tri- and tetrasaccharides but small quantities of high-molecular-mass levan. It may act more as a sucrose hydrolase than as a fructan polymerase, and may be the key enzyme in the sucrose metabolism of G.diazotrophicus SRT4. The chain is Levansucrase from Gluconacetobacter diazotrophicus (Acetobacter diazotrophicus).